Consider the following 346-residue polypeptide: Short-wave-sensitive opsin 1 (346 aa).

At 1-31 the chain is on the extracellular side; sequence MSGEDDFYLFQNISSVGPWDGPQYHLAPVWA. Residue asparagine 12 is glycosylated (N-linked (GlcNAc...) asparagine). A helical membrane pass occupies residues 32–56; the sequence is FRLQAAFMGFVFFVGTPLNAIVLVA. Residues 57–68 lie on the Cytoplasmic side of the membrane; sequence TLHYKKLRQPLN. Residues 69-94 form a helical membrane-spanning segment; the sequence is YILVNVSLGGFLFCIFSVFTVFIASC. Over 95–108 the chain is Extracellular; it reads HGYFLFGRHVCALE. Cysteine 105 and cysteine 182 form a disulfide bridge. Residues 109–128 traverse the membrane as a helical segment; the sequence is AFLGSVAGLVTGWSLAFLAF. The Cytoplasmic portion of the chain corresponds to 129–147; that stretch reads ERYVVICKPFGSIRFNSKH. The chain crosses the membrane as a helical span at residues 148–171; the sequence is ALMVVLATWIIGIGVSIPPFFGWS. The Extracellular segment spans residues 172-197; sequence RFIPEGLQCSCGPDWYTVGTKYRSEY. The helical transmembrane segment at 198–225 threads the bilayer; sequence YTWFLFIFCFIIPLSLICFSYSQLLRTL. At 226-247 the chain is on the cytoplasmic side; it reads RAVAAQQQESATTQKAEREVSH. The helical transmembrane segment at 248 to 271 threads the bilayer; sequence MVVVMVGSFCLCYVPYAALAMYMV. Residues 272–279 are Extracellular-facing; sequence NNRNHGLD. The chain crosses the membrane as a helical span at residues 280–304; the sequence is LRLVTIPAFFSKSSCVYNPIIYCFM. N6-(retinylidene)lysine is present on lysine 291. Residues 305–346 lie on the Cytoplasmic side of the membrane; it reads NKQFRACILEMVCRKPMADESDVSGSQKTEVSTVSSSKVGPH. Residues 324–346 form a disordered region; sequence ESDVSGSQKTEVSTVSSSKVGPH. Low complexity predominate over residues 330–346; sequence SQKTEVSTVSSSKVGPH.

This sequence belongs to the G-protein coupled receptor 1 family. Opsin subfamily. Post-translationally, phosphorylated on some or all of the serine and threonine residues present in the C-terminal region. Expressed in the inner and outer segments of cone photoreceptor cells in the retina (at protein level).

It is found in the cell membrane. The protein localises to the photoreceptor inner segment. Its subcellular location is the cell projection. The protein resides in the cilium. It localises to the photoreceptor outer segment. It is found in the cytoplasm. The protein localises to the perinuclear region. Its function is as follows. Visual pigments are the light-absorbing molecules that mediate vision. They consist of an apoprotein, opsin, covalently linked to cis-retinal. Required for the maintenance of cone outer segment organization in the ventral retina, but not essential for the maintenance of functioning cone photoreceptors. Involved in ensuring correct abundance and localization of retinal membrane proteins. May increase spectral sensitivity in dim light. This is Short-wave-sensitive opsin 1 (Opn1sw) from Mus musculus (Mouse).